A 79-amino-acid polypeptide reads, in one-letter code: Small ribosomal subunit protein uS11 (79 aa).

The residue at position 14 (Ser-14) is a Phosphoserine. Glycyl lysine isopeptide (Lys-Gly) (interchain with G-Cter in SUMO2) cross-links involve residues Lys-59 and Lys-61.

This sequence belongs to the universal ribosomal protein uS11 family. Component of the small ribosomal subunit. Part of the small subunit (SSU) processome, composed of more than 70 proteins and the RNA chaperone small nucleolar RNA (snoRNA) U3.

Its subcellular location is the cytoplasm. It is found in the nucleus. It localises to the nucleolus. Functionally, component of the small ribosomal subunit. The ribosome is a large ribonucleoprotein complex responsible for the synthesis of proteins in the cell. Part of the small subunit (SSU) processome, first precursor of the small eukaryotic ribosomal subunit. During the assembly of the SSU processome in the nucleolus, many ribosome biogenesis factors, an RNA chaperone and ribosomal proteins associate with the nascent pre-rRNA and work in concert to generate RNA folding, modifications, rearrangements and cleavage as well as targeted degradation of pre-ribosomal RNA by the RNA exosome. The sequence is that of Small ribosomal subunit protein uS11 (RPS14) from Sus scrofa (Pig).